Reading from the N-terminus, the 624-residue chain is tRNA uridine 5-carboxymethylaminomethyl modification enzyme MnmG (624 aa).

Residues 13–18, V125, and S180 each bind FAD; that span reads GGGHAG. Residue 273 to 287 coordinates NAD(+); that stretch reads GPRYCPSIEDKIVRF. Residue Q370 coordinates FAD.

This sequence belongs to the MnmG family. Homodimer. Heterotetramer of two MnmE and two MnmG subunits. FAD serves as cofactor.

It localises to the cytoplasm. Its function is as follows. NAD-binding protein involved in the addition of a carboxymethylaminomethyl (cmnm) group at the wobble position (U34) of certain tRNAs, forming tRNA-cmnm(5)s(2)U34. This Legionella pneumophila subsp. pneumophila (strain Philadelphia 1 / ATCC 33152 / DSM 7513) protein is tRNA uridine 5-carboxymethylaminomethyl modification enzyme MnmG.